The primary structure comprises 288 residues: Plasmodesmata-located protein 6 (288 aa).

An N-terminal signal peptide occupies residues Met-1–Ala-22. Over Ala-23–Thr-256 the chain is Extracellular. Gnk2-homologous domains are found at residues Asp-25–Phe-132 and Asp-137–Gly-234. 6 cysteine pairs are disulfide-bonded: Cys-32/Cys-110, Cys-84/Cys-95, Cys-98/Cys-123, Cys-145/Cys-212, Cys-188/Cys-197, and Cys-200/Cys-225. The helical transmembrane segment at Leu-257–Met-277 threads the bilayer. A necessary and sufficient for plasmodesmal targeting region spans residues Leu-257–Met-277. At Ala-278–Lys-288 the chain is on the cytoplasmic side.

Belongs to the cysteine-rich repeat secretory protein family. Plasmodesmata-located proteins (PDLD) subfamily. (Microbial infection) Interacts with Grapevine fanleaf virus (GFLV) 2B-MP. In terms of tissue distribution, highly expressed in inflorescence silique (at mRNA level).

It is found in the cell membrane. Its subcellular location is the cell junction. The protein resides in the plasmodesma. Functionally, modulates cell-to-cell trafficking. The polypeptide is Plasmodesmata-located protein 6 (Arabidopsis thaliana (Mouse-ear cress)).